A 386-amino-acid chain; its full sequence is Probable pectin lyase F (386 aa).

A signal peptide spans 1 to 16; the sequence is MKTAVLSLLLALQAYA. Cys77 and Cys101 form a disulfide bridge. An N-linked (GlcNAc...) asparagine glycan is attached at Asn124. Arg251 is a catalytic residue. The cysteines at positions 326 and 334 are disulfide-linked.

This sequence belongs to the polysaccharide lyase 1 family.

The protein resides in the secreted. The catalysed reaction is Eliminative cleavage of (1-&gt;4)-alpha-D-galacturonan methyl ester to give oligosaccharides with 4-deoxy-6-O-methyl-alpha-D-galact-4-enuronosyl groups at their non-reducing ends.. Functionally, pectinolytic enzymes consist of four classes of enzymes: pectin lyase, polygalacturonase, pectin methylesterase and rhamnogalacturonase. Among pectinolytic enzymes, pectin lyase is the most important in depolymerization of pectin, since it cleaves internal glycosidic bonds of highly methylated pectins. The protein is Probable pectin lyase F (pelF) of Neosartorya fischeri (strain ATCC 1020 / DSM 3700 / CBS 544.65 / FGSC A1164 / JCM 1740 / NRRL 181 / WB 181) (Aspergillus fischerianus).